Here is a 332-residue protein sequence, read N- to C-terminus: Beta-ketoacyl-[acyl-carrier-protein] synthase III (332 aa).

Catalysis depends on residues cysteine 114 and histidine 255. The ACP-binding stretch occupies residues glutamine 256–arginine 260. Asparagine 285 is a catalytic residue.

The protein belongs to the thiolase-like superfamily. FabH family. As to quaternary structure, homodimer.

The protein localises to the cytoplasm. The catalysed reaction is malonyl-[ACP] + acetyl-CoA + H(+) = 3-oxobutanoyl-[ACP] + CO2 + CoA. Its pathway is lipid metabolism; fatty acid biosynthesis. Catalyzes the condensation reaction of fatty acid synthesis by the addition to an acyl acceptor of two carbons from malonyl-ACP. Catalyzes the first condensation reaction which initiates fatty acid synthesis and may therefore play a role in governing the total rate of fatty acid production. Possesses both acetoacetyl-ACP synthase and acetyl transacylase activities. Its substrate specificity determines the biosynthesis of branched-chain and/or straight-chain of fatty acids. This chain is Beta-ketoacyl-[acyl-carrier-protein] synthase III, found in Sulfurimonas denitrificans (strain ATCC 33889 / DSM 1251) (Thiomicrospira denitrificans (strain ATCC 33889 / DSM 1251)).